The chain runs to 420 residues: 3-oxoacyl-[acyl-carrier-protein] synthase 2 (420 aa).

Positions 13–419 constitute a Ketosynthase family 3 (KS3) domain; it reads FPNVVVTGIA…GHNVAIAFGC (407 aa). Active-site for beta-ketoacyl synthase activity residues include cysteine 173, histidine 314, and histidine 349.

This sequence belongs to the thiolase-like superfamily. Beta-ketoacyl-ACP synthases family.

Its subcellular location is the cytoplasm. The catalysed reaction is an ultra-long-chain di-unsaturated fatty acyl-[ACP] + malonyl-[ACP] + H(+) = a 3-oxo-ultra-long-chain di-unsaturated fatty acyl-[ACP] + holo-[ACP] + CO2. Its pathway is lipid metabolism; mycolic acid biosynthesis. In terms of biological role, part of the mycobacterial fatty acid elongation system FAS-II, which is involved in mycolic acid biosynthesis. Catalyzes the elongation of long chain acyl-ACP substrates by the addition of two carbons from malonyl-ACP to an acyl acceptor. Involved in extension of the mycolate chains to full lengths and produces longer chain multiunsaturated hydrocarbons averaging 54 carbons in length. This is 3-oxoacyl-[acyl-carrier-protein] synthase 2 (kasB) from Mycobacterium leprae (strain TN).